The chain runs to 204 residues: Holliday junction branch migration complex subunit RuvA (204 aa).

A domain I region spans residues 1–64 (MIAQIRGKLI…QDSILLVGFC (64 aa)). The interval 65-143 (TENEKQLFKL…GWTSKEQITF (79 aa)) is domain II. The interval 144 to 154 (INNKKDAIDQS) is flexible linker. The interval 154–204 (SVMEEDAISALINLGYKSQAAKDAIDRVISEGGENKSLDVILKKALKVLAM) is domain III.

It belongs to the RuvA family. In terms of assembly, homotetramer. Forms an RuvA(8)-RuvB(12)-Holliday junction (HJ) complex. HJ DNA is sandwiched between 2 RuvA tetramers; dsDNA enters through RuvA and exits via RuvB. An RuvB hexamer assembles on each DNA strand where it exits the tetramer. Each RuvB hexamer is contacted by two RuvA subunits (via domain III) on 2 adjacent RuvB subunits; this complex drives branch migration. In the full resolvosome a probable DNA-RuvA(4)-RuvB(12)-RuvC(2) complex forms which resolves the HJ.

Its subcellular location is the cytoplasm. The RuvA-RuvB-RuvC complex processes Holliday junction (HJ) DNA during genetic recombination and DNA repair, while the RuvA-RuvB complex plays an important role in the rescue of blocked DNA replication forks via replication fork reversal (RFR). RuvA specifically binds to HJ cruciform DNA, conferring on it an open structure. The RuvB hexamer acts as an ATP-dependent pump, pulling dsDNA into and through the RuvAB complex. HJ branch migration allows RuvC to scan DNA until it finds its consensus sequence, where it cleaves and resolves the cruciform DNA. This chain is Holliday junction branch migration complex subunit RuvA, found in Syntrophus aciditrophicus (strain SB).